The chain runs to 599 residues: UvrABC system protein C (599 aa).

A GIY-YIG domain is found at 15-93 (PCPGVYRMLD…IKALQPRYNV (79 aa)). The UVR domain maps to 202–237 (QQVINELVIRMEEASGQLAFEQAAYYRDRIASLRQI).

It belongs to the UvrC family. As to quaternary structure, interacts with UvrB in an incision complex.

It is found in the cytoplasm. In terms of biological role, the UvrABC repair system catalyzes the recognition and processing of DNA lesions. UvrC both incises the 5' and 3' sides of the lesion. The N-terminal half is responsible for the 3' incision and the C-terminal half is responsible for the 5' incision. In Nitrosococcus oceani (strain ATCC 19707 / BCRC 17464 / JCM 30415 / NCIMB 11848 / C-107), this protein is UvrABC system protein C.